Consider the following 412-residue polypeptide: Class E basic helix-loop-helix protein 40 (412 aa).

Positions 1-21 are disordered; it reads MERIPSAQPPPTCLPKAPGLE. The segment at 1 to 139 is essential for interaction with BMAL1, E-box binding and repressor activity against the CLOCK-BMAL1 heterodimer; sequence MERIPSAQPP…LSGRNVEAGQ (139 aa). The 56-residue stretch at 52–107 folds into the bHLH domain; sequence TYKLPHRLIEKKRRDRINECIAQLKDLLPEHLKLTTLGHLEKAVVLELTLKHVKAL. The interval 75–79 is necessary for interaction with RXRA and repressor activity against RXRA; it reads LKDLL. Positions 142–175 constitute an Orange domain; sequence FCSGFQTCAREVLQYLAKHENTRDLKSSQLVTHL. A Glycyl lysine isopeptide (Lys-Gly) (interchain with G-Cter in SUMO1, SUMO2 and SUMO3) cross-link involves residue K159. K167 is covalently cross-linked (Glycyl lysine isopeptide (Lys-Gly) (interchain with G-Cter in SUMO2)). Disordered stretches follow at residues 182-257 and 279-298; these read LLQG…LRVE and KQES…SDDE. At S235 the chain carries Phosphoserine. A compositionally biased stretch (basic and acidic residues) spans 248–257; sequence ESEKSELRVE. K279 participates in a covalent cross-link: Glycyl lysine isopeptide (Lys-Gly) (interchain with G-Cter in SUMO1); alternate. Residue K279 forms a Glycyl lysine isopeptide (Lys-Gly) (interchain with G-Cter in SUMO1, SUMO2 and SUMO3); alternate linkage. A Glycyl lysine isopeptide (Lys-Gly) (interchain with G-Cter in SUMO2); alternate cross-link involves residue K279. K288 participates in a covalent cross-link: Glycyl lysine isopeptide (Lys-Gly) (interchain with G-Cter in SUMO2). S383 is subject to Phosphoserine.

As to quaternary structure, homodimer. Heterodimer with BHLHE41/DEC2. Interacts with TCF3/E47. Interacts with ubiquitin-conjugating enzyme UBE2I/UBC9. Interacts with HDAC1, SUMO1, RXRA and BMAL1. Post-translationally, ubiquitinated; which may lead to proteasomal degradation. In terms of processing, sumoylation inhibits its ubiquitination and promotes its negative regulation of the CLOCK-BMAL1 heterodimer transcriptional activator activity.

It localises to the cytoplasm. Its subcellular location is the nucleus. In terms of biological role, transcriptional repressor involved in the regulation of the circadian rhythm by negatively regulating the activity of the clock genes and clock-controlled genes. Acts as the negative limb of a novel autoregulatory feedback loop (DEC loop) which differs from the one formed by the PER and CRY transcriptional repressors (PER/CRY loop). Both these loops are interlocked as it represses the expression of PER1/2 and in turn is repressed by PER1/2 and CRY1/2. Represses the activity of the circadian transcriptional activator: CLOCK-BMAL1|BMAL2 heterodimer by competing for the binding to E-box elements (5'-CACGTG-3') found within the promoters of its target genes. Negatively regulates its own expression and the expression of DBP and BHLHE41/DEC2. Acts as a corepressor of RXR and the RXR-LXR heterodimers and represses the ligand-induced RXRA and NR1H3/LXRA transactivation activity. May be involved in the regulation of chondrocyte differentiation via the cAMP pathway. Represses the transcription of NR0B2 and attentuates the transactivation of NR0B2 by the CLOCK-BMAL1 complex. Drives the circadian rhythm of blood pressure through transcriptional repression of ATP1B1 in the cardiovascular system. The polypeptide is Class E basic helix-loop-helix protein 40 (BHLHE40) (Ovis aries (Sheep)).